The sequence spans 2052 residues: MNMSKQGIFQTVGSGLDHILSLADIEEEQMIQSVDRTAVTGASYFTSVDQSSVHTAEVGSHQIEPLKTSVDKPGSKKTQGEKFFLIHSADWLTTHALFHEVAKLDVVKLLYNEQFAVQGLLRYHTYARFGIEIQVQINPTPFQQGGLICAMVPGDQSYGSIASLTVYPHGLLNCNINNVVRIKVPFIYTRGAYHFKDPQYPVWELTIRVWSELNIGTGTSAYTSLNVLARFTDLELHGLTPLSTQMMRNEFRVSTTENVVNLSNYEDARAKMSFALDQEDWKSDPSQGGGIKITHFTTWTSIPTLAAQFPFNASDSVGQQIKVIPVDPYFFQMTNTNPDQKCITALASICQMFCFWRGDLVFDFQVFPTKYHSGRLLFCFVPGNELIDVTGITLKQATTAPCAVMDITGVQSTLRFRVPWISDTPYRVNRYTKSAHQKGEYTAIGKLIVYCYNRLTSPSNVASHVRVNVYLSAINLECFAPLYHAMDVTTQVGDDSGGFSTTVSTEQNVPDPQVGIKGKANRGKMDVSGVQAPVGAITTIEDPVLAKKVPETFPELKPGESRHTSDHMSIYKFMGRSHFLCTFTFNSNNKEYTFPITLSSTSNPPHGLPSTLRWFFNLFQLYRGPLDLTIIITGATDVDGMAWFTPVGLAVDTPWVEKKSALSIDYKTALGAVRFNTRRTGNIQIRLPWYSYLYAVSGALDGLGDKTDSTFGLVSIQIANYNHSDEYLSFSCYLSVTEQSEFYFPRAPLNSNAMLSTESMMSRIAAGDLESSVDDPRSEEDRRFESHIECRKPYKELRLEVGKQRLKYAQEELSNEVLPPPRKMKGLFSQAKISLFYTEEHEIMKFSWRGVTADTRALRRFGFSLAAGRSVWTLEMDAGVLTGRLIRLNDEKWTEMKDDKIVSLIEKFTSNKYWSKVNFPHGMLDLEEIAANSKDFPNMSETDLCFLLHWLNPKKINLADRMLGLSGVQEIKEQGVGLIAECRTFLDSIAGTLKSMIFGFHHSVTVEIINIVLCFIKSGILLYVIQQLNQDEHSHIIGLLRVMNYADIGCSVISCGKVFSKMLETVFNWQMDSRMMELRTQSFSNWLRDICSGITIFKSFKDAIYWLCTKLKDFYEVNYGKKKDVLNILKDNQQKIEKAIEEADNFCILQIQDVEKFDQYQTSNWSNPSPKTVYVKEAIDRRLHFKVEVKPASFFKNPHNDMLNVNLAKTNDAIKDMSCVDLIMDGHNISLMDLLSSLVMTVEIRKQNMSEFMELWSQGISDDDSAVAEFFQSFPSGEPSNSKLSSFFQSVTNHKWVAVGAAVGILGLLVGGWFVYKHFSRKEEEPIPAEGVYHGVTKPKQVIKLDADPVESQSTLEIAGLVRKNLVQFGVGEKNGCVRWVMNALGVKDDWLLVPSHAYKFEKDYEMMEFYFNRGGTYYSISAGNVVIQSLDVGFQDVVLMKVPTIPKFRDITQHFIKKGDVPRALNRLATLVTTVNGTPMLISEGPLKMEEKATYVHKKNDGTTVDLTVDQAWRGKGEGLPGMCGGALVSSNQSIQNAILGIHVAGGNSILVAKLITQEMFQNIDKKIESQRIMKVEFTQCSMNVVSKTLFRKSPIHHHIDKTMINFPAAMPFSKAEIDPMAMMLSKYSLPIVEEPEDYKEASVFYQNKIVGKTQLVDDFLDLDMAITGAPGIDAINMDSSPGFPYVQEKLTKRDLIWLDENGLLLGVHPRLAQRILFNTVMMENCSDLDVVFTTCPKDELRPLEKVLESKTRAIDACPLDYTILCRMYWGPAISYFHLNPGFHTGVAIGIDPDRQWDELFKTMIRFGDVGLDLDFSAFDASLSPFMIREAGRIMSELSGTPSHFGTALINTIIYSKHLLYNCCYHVCGSMPSGSPCTALLNSIINNINLYYVFSKIFGKSPVFFCQALRILCYGDDVLIVFSRDVQIDNLDLIGQKIVDEFKKLGMTATSADKNVPQLKPVSELTFLKRSFNLVEDRIRPAISEKTIWSLIAWQRSNAEFEQNLENAQWFAFMHGYEFYQKFYYFVQSCLEKEMIEYRLKSYDWWRMRFY.

Short sequence motifs ((L)YPX(n)L motif) lie at residues 167-171 and 200-205; these read YPHGL and YPVWEL. Residues 502–522 are disordered; the sequence is TVSTEQNVPDPQVGIKGKANR. The involved in P1-2A pentamerization stretch occupies residues 760–830; the sequence is MMSRIAAGDL…PRKMKGLFSQ (71 aa). Residues 1005–1025 traverse the membrane as a helical segment; sequence TVEIINIVLCFIKSGILLYVI. The segment at 1037 to 1064 is membrane-penetrating ability; it reads IGLLRVMNYADIGCSVISCGKVFSKMLE. The stretch at 1121-1146 forms a coiled coil; that stretch reads KKKDVLNILKDNQQKIEKAIEEADNF. A helical membrane pass occupies residues 1296–1316; it reads WVAVGAAVGILGLLVGGWFVY. Tyr1333 carries the post-translational modification O-(5'-phospho-RNA)-tyrosine. The Peptidase C3 domain maps to 1348 to 1562; that stretch reads DPVESQSTLE…VAKLITQEMF (215 aa). Residues His1397, Asp1437, and Cys1525 each act as for protease 3C activity in the active site. Residues 1810–1931 form the RdRp catalytic domain; sequence DVGLDLDFSA…VFSRDVQIDN (122 aa).

Belongs to the picornaviridae polyprotein family. As to quaternary structure, homodimer. Homomultimer; probably interacts with membranes in a multimeric form. Seems to assemble into amyloid-like fibers. Homodimer. Monomer. Interacts with protein 3CD. In terms of assembly, interacts with host ACBD3. As to quaternary structure, interacts with protein 3AB. Interacts with human MAVS. In terms of assembly, homodimer; disulfide-linked. As to quaternary structure, homopentamer. Homooligomer. Interacts with capsid protein VP2. Interacts with capsid protein VP3. In terms of assembly, interacts with capsid protein VP1. Interacts with capsid protein VP3. As to quaternary structure, interacts with capsid protein VP1. Interacts with capsid protein VP2. Specific enzymatic cleavages by viral protease in vivo yield a variety of precursors and mature proteins. Polyprotein processing intermediates are produced, such as P1-2A which is a functional precursor of the structural proteins, VP0 which is a VP4-VP2 precursor, VP1-2A precursor, 3ABC precursor which is a stable and catalytically active precursor of 3A, 3B and 3C proteins, 3AB and 3CD precursors. The assembly signal 2A is removed from VP1-2A by a host protease, possibly host Cathepsin L. This cleavage occurs over a region of 3 amino-acids probably generating VP1 proteins with heterogeneous C-termini. Post-translationally, during virion maturation, immature virions are rendered infectious following cleavage of VP0 into VP4 and VP2. This maturation seems to be an autocatalytic event triggered by the presence of RNA in the capsid and is followed by a conformational change of the particle. In terms of processing, the assembly signal 2A is removed from VP1-2A by a host protease, possibly host Cathepsin L in naked virions. This cleavage does not occur in enveloped virions. This cleavage occurs over a region of 3 amino-acids probably generating VP1 proteins with heterogeneous C-termini. VPg is uridylylated prior to priming replication into VPg-pUpU. Post-translationally, unlike other picornaviruses, does not seem to be myristoylated.

The protein resides in the virion. Its subcellular location is the host endosome. It localises to the host multivesicular body. It is found in the host membrane. The protein localises to the host mitochondrion outer membrane. The protein resides in the host cytoplasm. Its subcellular location is the host cytoplasmic vesicle membrane. The catalysed reaction is RNA(n) + a ribonucleoside 5'-triphosphate = RNA(n+1) + diphosphate. The enzyme catalyses a ribonucleoside 5'-triphosphate + H2O = a ribonucleoside 5'-diphosphate + phosphate + H(+). It carries out the reaction Selective cleavage of Gln-|-Gly bond in the poliovirus polyprotein. In other picornavirus reactions Glu may be substituted for Gln, and Ser or Thr for Gly.. Functionally, capsid proteins VP1, VP2, and VP3 form a closed capsid enclosing the viral positive strand RNA genome. All these proteins contain a beta-sheet structure called beta-barrel jelly roll. Together they form an icosahedral capsid (T=3) composed of 60 copies of each VP1, VP2, and VP3, with a diameter of approximately 300 Angstroms. VP1 is situated at the 12 fivefold axes, whereas VP2 and VP3 are located at the quasi-sixfold axes. The naked capsid interacts with the host receptor HAVCR1 to provide virion attachment to and probably entry into the target cell. In terms of biological role, VP0 precursor is a component of the immature procapsids. Plays a role in the assembly of the 12 pentamers into an icosahedral structure. Has not been detected in mature virions, supposedly owing to its small size. Its function is as follows. Precursor component of immature procapsids that corresponds to an extended form of the structural protein VP1. After maturation, possibly by the host Cathepsin L, the assembly signal 2A is cleaved to give rise to the mature VP1 protein. Functionally, functions as a viroporin. Affects membrane integrity and causes an increase in membrane permeability. Involved in host intracellular membrane rearrangements probably to give rise to the viral factories. Does not disrupt calcium homeostasis or glycoprotein trafficking. Antagonizes the innate immune response of the host by suppressing IFN-beta synthesis, which it achieves by interfering with the RIG-I/IFIH1 pathway. In terms of biological role, affects membrane integrity and causes an increase in membrane permeability. Associates with and induces structural rearrangements of intracellular membranes. Displays RNA-binding activity. Its function is as follows. The precursor 3ABC is targeted to the mitochondrial membrane where protease 3C activity cleaves and inhibits the host antiviral protein MAVS, thereby disrupting activation of IRF3 through the IFIH1/MDA5 pathway. In vivo, the protease activity of 3ABC precursor is more efficient in cleaving the 2BC precursor than that of protein 3C. The 3ABC precursor may therefore play a role in the proteolytic processing of the polyprotein. Possible viroporin. Functionally, interacts with the 3CD precursor and with RNA structures found at both the 5'- and 3'-termini of the viral genome. Since the 3AB precursor contains the hydrophobic domain 3A, it probably anchors the whole viral replicase complex to intracellular membranes on which viral RNA synthesis occurs. In terms of biological role, may serve as membrane anchor to the 3AB and 3ABC precursors via its hydrophobic domain. May interact with RNA. Acts as a primer for viral RNA replication and remains covalently bound to viral genomic RNA. VPg is uridylylated prior to priming replication into VPg-pUpU. The VPg-pUpU is then used as primer on the genomic RNA poly(A) by the RNA-dependent RNA polymerase to replicate the viral genome. Its function is as follows. Cysteine protease that generates mature viral proteins from the precursor polyprotein. In addition to its proteolytic activity, it binds to viral RNA, and thus influences viral genome replication. RNA and substrate bind cooperatively to the protease. Cleaves IKBKG/NEMO to impair innate immune signaling. Cleaves host PABPC1 which may participate in the switch of viral translation to RNA synthesis. Functionally, interacts with the 3AB precursor and with RNA structures found at both the 5'- and 3'-termini of the viral genome. Disrupts TLR3 signaling by degrading the host adapter protein TICAM1/TRIF. In terms of biological role, RNA-directed RNA polymerase 3D-POL replicates genomic and antigenomic RNA by recognizing replications specific signals. This is Genome polyprotein from Homo sapiens (Human).